The sequence spans 155 residues: Egg-lysin (155 aa).

An N-terminal signal peptide occupies residues 1-18 (MKLLVLCLFAMMATLAVS).

In terms of assembly, monomer. Homodimer. Molecules associate into dimers and then rapidly dissociate again. Interacts (as a monomer) with the egg vitelline layer protein VERL (via VERL repeats); each VERL chain can bind multiple copies of lysin. In terms of tissue distribution, sperm (at protein level).

Its subcellular location is the cytoplasmic vesicle. The protein localises to the secretory vesicle. It is found in the acrosome lumen. Its function is as follows. Creates a 3 um hole in the egg vitelline layer through which the sperm passes. Does not have enzyme activity. Species-specific interaction between the sperm protein lysin and the egg protein VERL exposes a basic surface on lysin that may dissociate the egg vitelline layer via electrostatic repulsion. Plays a role in ensuring species-specific fertilization. The chain is Egg-lysin from Haliotis corrugata (Pink abalone).